An 81-amino-acid polypeptide reads, in one-letter code: uncharacterized protein (81 aa).

This is an uncharacterized protein from Synechocystis sp. (strain ATCC 27184 / PCC 6803 / Kazusa).